The primary structure comprises 335 residues: Glyceraldehyde-3-phosphate dehydrogenase (335 aa).

Residues R10–I11, D33, R77, and S119 contribute to the NAD(+) site. D-glyceraldehyde 3-phosphate is bound by residues S150–T152, T181, T210–G211, and R233. The active-site Nucleophile is C151. N315 contributes to the NAD(+) binding site.

This sequence belongs to the glyceraldehyde-3-phosphate dehydrogenase family. Homotetramer.

The protein resides in the cytoplasm. It catalyses the reaction D-glyceraldehyde 3-phosphate + phosphate + NAD(+) = (2R)-3-phospho-glyceroyl phosphate + NADH + H(+). The protein operates within carbohydrate degradation; glycolysis; pyruvate from D-glyceraldehyde 3-phosphate: step 1/5. In terms of biological role, catalyzes the oxidative phosphorylation of glyceraldehyde 3-phosphate (G3P) to 1,3-bisphosphoglycerate (BPG) using the cofactor NAD. The first reaction step involves the formation of a hemiacetal intermediate between G3P and a cysteine residue, and this hemiacetal intermediate is then oxidized to a thioester, with concomitant reduction of NAD to NADH. The reduced NADH is then exchanged with the second NAD, and the thioester is attacked by a nucleophilic inorganic phosphate to produce BPG. This chain is Glyceraldehyde-3-phosphate dehydrogenase (gap), found in Chlamydia pneumoniae (Chlamydophila pneumoniae).